Here is a 136-residue protein sequence, read N- to C-terminus: Group 1 truncated hemoglobin GlbN (136 aa).

Residue H81 coordinates heme.

It belongs to the truncated hemoglobin family. Group I subfamily. In terms of assembly, homodimer. Requires heme as cofactor.

Its function is as follows. Binds oxygen cooperatively with very high affinity (P(50) = 0.013 mmHg at 20 degrees Celsius) because of a fast combination (25 microM(-1)sec(-1)) and a slow dissociation (0.2 sec(-1)) rate. The protein is Group 1 truncated hemoglobin GlbN (glbN) of Mycobacterium bovis (strain ATCC BAA-935 / AF2122/97).